A 138-amino-acid polypeptide reads, in one-letter code: MNQLLREVLTPDAERTQNFTVGDTVKVHYKIVESGKERVQIYEGVVISVANEANGKTFTVRRVSYDVGVERIFPLFSPRIAKIELIRKGKVRRAKLYYLRNLAGKAARIKELKGGKALVSEDRKRQQAAAATKSTTTE.

The protein belongs to the bacterial ribosomal protein bL19 family.

Functionally, this protein is located at the 30S-50S ribosomal subunit interface and may play a role in the structure and function of the aminoacyl-tRNA binding site. In Leptospira interrogans serogroup Icterohaemorrhagiae serovar Lai (strain 56601), this protein is Large ribosomal subunit protein bL19.